The primary structure comprises 412 residues: MKGIVLVMDGMGDRPLKEFDNQTPLQAANTPNMDEMAKNGITGIMDSIAPGIIPGSDTAHLSILGYDPYEVYTGRGPFEAAGVGVDVIPGDIAFRCNFSTADENGIVTDRRAGRIREGTHEIVEVLNTMVLEDYPDIKIIFKESTGHRAVLVLRGEGLSDKVSDADPKVEGNKPKEVIPLDDSVEAKKTADILNKLVVKSYEMIKDHPVNLERIENNEPPANIIIPRGAGEVPVVEALNDKYEVNSACIAETGLIMGIGRFAGMDIIEMEDVTGGIDTNLENIRDTIIDQVKNSDHDFFLINIDGADEAGHDGQAVEKRDFIEKVDRVVMSELKKLEDVYIFLTADHSTPISVLNHSGDPVPVIITGPEVRVDDVCEYSEVAVAKGGLCRIRGADVMNIMMDLMNYAHKFGA.

The protein belongs to the BPG-independent phosphoglycerate mutase family. A-PGAM subfamily.

The enzyme catalyses (2R)-2-phosphoglycerate = (2R)-3-phosphoglycerate. The protein operates within carbohydrate degradation; glycolysis; pyruvate from D-glyceraldehyde 3-phosphate: step 3/5. Its function is as follows. Catalyzes the interconversion of 2-phosphoglycerate and 3-phosphoglycerate. The protein is 2,3-bisphosphoglycerate-independent phosphoglycerate mutase of Methanobrevibacter smithii (strain ATCC 35061 / DSM 861 / OCM 144 / PS).